The following is a 210-amino-acid chain: Small ribosomal subunit protein uS3 (210 aa).

A KH type-2 domain is found at 17 to 86 (IDEFLEKELR…NPQIDVQEIK (70 aa)).

The protein belongs to the universal ribosomal protein uS3 family. Part of the 30S ribosomal subunit.

Functionally, binds the lower part of the 30S subunit head. The chain is Small ribosomal subunit protein uS3 from Pyrococcus horikoshii (strain ATCC 700860 / DSM 12428 / JCM 9974 / NBRC 100139 / OT-3).